Here is a 208-residue protein sequence, read N- to C-terminus: N-(5'-phosphoribosyl)anthranilate isomerase (208 aa).

It belongs to the TrpF family.

It carries out the reaction N-(5-phospho-beta-D-ribosyl)anthranilate = 1-(2-carboxyphenylamino)-1-deoxy-D-ribulose 5-phosphate. It functions in the pathway amino-acid biosynthesis; L-tryptophan biosynthesis; L-tryptophan from chorismate: step 3/5. This Methanococcus maripaludis (strain C7 / ATCC BAA-1331) protein is N-(5'-phosphoribosyl)anthranilate isomerase.